The sequence spans 526 residues: GMP synthase [glutamine-hydrolyzing] (526 aa).

Residues 3–199 form the Glutamine amidotransferase type-1 domain; it reads KVAIIDFGSQ…FIKIAGCKTD (197 aa). Residue Cys-83 is the Nucleophile of the active site. Active-site residues include His-174 and Glu-176. Residues 200 to 392 enclose the GMPS ATP-PPase domain; sequence WTMNSFLDEQ…LGISDEILMR (193 aa). 227–233 provides a ligand contact to ATP; the sequence is SGGVDSS.

Homodimer.

The enzyme catalyses XMP + L-glutamine + ATP + H2O = GMP + L-glutamate + AMP + diphosphate + 2 H(+). It participates in purine metabolism; GMP biosynthesis; GMP from XMP (L-Gln route): step 1/1. Its function is as follows. Catalyzes the synthesis of GMP from XMP. This chain is GMP synthase [glutamine-hydrolyzing], found in Ehrlichia canis (strain Jake).